The sequence spans 294 residues: Polyketide transferase grgF (294 aa).

Active-site residues include Cys-115, Asp-240, and His-269.

This sequence belongs to the polyketide transferase af380 family. In terms of assembly, homodimer.

It functions in the pathway secondary metabolite biosynthesis. Functionally, polyketide transferase; part of the gene cluster that mediates the biosynthesis of gregatin A, a fungal polyketide featuring an alkylated furanone core. The PKS grgA synthesizes C11 and C4 polyketide chains in the presence and absence of the trans-enoyl reductase grgB, respectively. The polyketide transferase grgF is then responsible for the fusion of the two carbon chains to produce the furanone skeleton of gregatin A. GrgF first undergoes a conformational change to an open form, and the active site Cys-115 is acylated by the C11 chain. After the elimination of the phosphopantetheinyl chain, the second polyketide chain of four carbons long is delivered adjacent to the enzyme-bound C11 chain. The catalytic histidine, His-269, deprotonates a proton from C-2 of the long chain, and the resultant carbanion attacks the C-1 carbonyl of the crotonyl group to perform Claisen condensation, by which the phosphopantetheinyl chain is released. Eventually, hydrolysis of the thioester linkage probably by a His-269-activated water molecule completes the reaction to afford the grgF final product. Next, the cytochrome P450 monooxygenase grgG accepts the unstable grgF final product as substrate and performs the oxidative cyclization to furnish the gregatin scaffold and leads to the formation of desmethylgregatin A. Finally, the O-methyltransferase grgD methylates the carboxyl group of desmethylgregatin A to provide gregatin A. The chain is Polyketide transferase grgF from Penicillium sp.